Reading from the N-terminus, the 120-residue chain is UPF0231 protein YacL (120 aa).

It belongs to the UPF0231 family.

The protein is UPF0231 protein YacL (yacL) of Shigella flexneri.